Consider the following 118-residue polypeptide: MARIAGINIPDHKHTVIALTAIYGIGKTRSQAICAAAGIAENVKISELSEEQIDKLRDEVGKFTVEGDLRREVTLNIKRLLDLGCYRGLRHRRGLPVRGQRTKTNARTRKGPRKPIKK.

Positions 94-118 (GLPVRGQRTKTNARTRKGPRKPIKK) are disordered.

It belongs to the universal ribosomal protein uS13 family. Part of the 30S ribosomal subunit. Forms a loose heterodimer with protein S19. Forms two bridges to the 50S subunit in the 70S ribosome.

Its function is as follows. Located at the top of the head of the 30S subunit, it contacts several helices of the 16S rRNA. In the 70S ribosome it contacts the 23S rRNA (bridge B1a) and protein L5 of the 50S subunit (bridge B1b), connecting the 2 subunits; these bridges are implicated in subunit movement. Contacts the tRNAs in the A and P-sites. The protein is Small ribosomal subunit protein uS13 of Mannheimia succiniciproducens (strain KCTC 0769BP / MBEL55E).